Here is a 480-residue protein sequence, read N- to C-terminus: uncharacterized protein (480 aa).

Residues 1 to 20 form a disordered region; that stretch reads MDVKDTGINRSDTPISDQDH.

This is an uncharacterized protein from Arabidopsis thaliana (Mouse-ear cress).